A 549-amino-acid chain; its full sequence is MISVIKSLLTLSVLSTLAAAKFESATPPIEVVGNKFYYSNNGTQFLLRGIAYQQDTSGSVSNGYDSDPNRKYNDPLADADACKRDVQYFIDTNTNTLRVYGIDPDKDHEECMKIFSDAGIYVIADLSEPTVSVNRINPEWNLDLYERYTKVIDNMQEYSNVLGFFAGNEVTNNRTNTDASPFVKAAVRDMKKYIKDNDYRTIPVGYSSNDDEDTRVAIADYFACGSLDDRADFFGINMYEWCGRSTFATSGYKDRTEDFKNLTIPIFFSEYGCNEVSPRVFQEVGTLYSDQMTDVWSGGIVYMYYEEANHYGLVSLNGDRVSTLADYNNYKSAIKSISPSLARRSTIQSEDSTKTMACPDNSHSTWRASTELPPTPDEEFCDCISQSFNCVVADDVDAEDYSTLFGEVCGYIDCGDISANGNTGEYGGFSFCSDKDRLSYVLNQYYHDQNERADACDFAGSASINDNASASTSCSAAGGRGLQSGRRSSTTRGGSSSSRSSSSSSSSSTGSGSSNAGIKVGGGQMSTVKLITITTIVTAFVGGLSIIFY.

The signal sequence occupies residues 1–20 (MISVIKSLLTLSVLSTLAAA). Asn-41 carries an N-linked (GlcNAc...) asparagine glycan. A disulfide bridge connects residues Cys-82 and Cys-111. Residues Asn-173 and Asn-261 are each glycosylated (N-linked (GlcNAc...) asparagine). 5 disulfides stabilise this stretch: Cys-224–Cys-358, Cys-242–Cys-273, Cys-381–Cys-432, Cys-390–Cys-456, and Cys-409–Cys-414. N-linked (GlcNAc...) asparagine glycosylation occurs at Asn-467. Residues 470-518 (ASTSCSAAGGRGLQSGRRSSTTRGGSSSSRSSSSSSSSSTGSGSSNAGI) are disordered. A compositionally biased stretch (low complexity) spans 484–514 (SGRRSSTTRGGSSSSRSSSSSSSSSTGSGSS).

The protein belongs to the glycosyl hydrolase 72 family.

It is found in the cell membrane. This chain is Protein EPD2 (EPD2), found in Candida maltosa (Yeast).